Reading from the N-terminus, the 551-residue chain is Hedycaryol synthase TPS20CT (551 aa).

Residues R266, D303, D307, R444, and D447 each contribute to the (2E,6E)-farnesyl diphosphate site. D303 and D307 together coordinate Mg(2+). The DDXXD motif signature appears at 303–307; that stretch reads DDIYD. Mg(2+) contacts are provided by D447, S451, and E455.

Belongs to the terpene synthase family. Tpsb subfamily. Mg(2+) is required as a cofactor. It depends on Mn(2+) as a cofactor. As to expression, highly expressed in glandular trichomes.

It carries out the reaction (2E,6E)-farnesyl diphosphate + H2O = (2E,6E)-hedycaryol + diphosphate. It functions in the pathway secondary metabolite biosynthesis; terpenoid biosynthesis. Involved in sesquiterpene olefins biosynthesis, constituants of cannabinoids and terpenoids-rich resins. Catalyzes primarily the conversion of (2E)-farnesyl diphosphate to hedycaryol, which is spontaneously converted to elemol as a thermal degradation product. This Cannabis sativa (Hemp) protein is Hedycaryol synthase TPS20CT.